A 102-amino-acid chain; its full sequence is RNA-binding protein Hfq (102 aa).

The Sm domain maps to 9 to 68 (DPFLNALRRERVPVSIYLVNGIKLQGQIESFDQFVILLKNTVSQMVYKHAISTVVPSRPV). The tract at residues 63 to 102 (VPSRPVSHHSNNAGGGTSSNYHHGSSAQGTSAQQDSEETE) is disordered. Positions 70 to 96 (HHSNNAGGGTSSNYHHGSSAQGTSAQQ) are enriched in polar residues.

The protein belongs to the Hfq family. In terms of assembly, homohexamer.

In terms of biological role, RNA chaperone that binds small regulatory RNA (sRNAs) and mRNAs to facilitate mRNA translational regulation in response to envelope stress, environmental stress and changes in metabolite concentrations. Also binds with high specificity to tRNAs. This is RNA-binding protein Hfq from Citrobacter koseri (strain ATCC BAA-895 / CDC 4225-83 / SGSC4696).